The following is a 683-amino-acid chain: Long-chain-fatty-acid--CoA ligase 5 (683 aa).

A helical; Signal-anchor for type III membrane protein transmembrane segment spans residues L12 to I32. Residues N33 to E683 are Cytoplasmic-facing. An N6-acetyllysine modification is found at K361.

This sequence belongs to the ATP-dependent AMP-binding enzyme family. Expressed most abundantly in the small intestine, and to a much lesser extent in the lung, liver, adrenal gland, adipose tissue and kidney.

It localises to the mitochondrion. The protein localises to the endoplasmic reticulum. Its subcellular location is the mitochondrion outer membrane. It is found in the endoplasmic reticulum membrane. The protein resides in the cell membrane. It catalyses the reaction a long-chain fatty acid + ATP + CoA = a long-chain fatty acyl-CoA + AMP + diphosphate. The catalysed reaction is (5Z,8Z,11Z,14Z)-eicosatetraenoate + ATP + CoA = (5Z,8Z,11Z,14Z)-eicosatetraenoyl-CoA + AMP + diphosphate. It carries out the reaction 15-hydroxy-(5Z,8Z,11Z,13E)-eicosatetraenoate + ATP + CoA = 15-hydroxy-(5Z,8Z,11Z,13E)-eicosatetraenoyl-CoA + AMP + diphosphate. The enzyme catalyses 12-hydroxy-(5Z,8Z,10E,14Z)-eicosatetraenoate + ATP + CoA = 12-hydroxy-(5Z,8Z,10E,14Z)-eicosatetraenoyl-CoA + AMP + diphosphate. It catalyses the reaction 5-hydroxy-(6E,8Z,11Z,14Z)-eicosatetraenoate + ATP + CoA = 5-hydroxy-(6E,8Z,11Z,14Z)-eicosatetraenoyl-CoA + AMP + diphosphate. The catalysed reaction is 14,15-epoxy-(5Z,8Z,11Z)-eicosatrienoate + ATP + CoA = 14,15-epoxy-(5Z,8Z,11Z)-eicosatrienoyl-CoA + AMP + diphosphate. It carries out the reaction 11,12-epoxy-(5Z,8Z,14Z)-eicosatrienoate + ATP + CoA = 11,12-epoxy-(5Z,8Z,14Z)-eicosatrienoyl-CoA + AMP + diphosphate. The enzyme catalyses hexadecanoate + ATP + CoA = hexadecanoyl-CoA + AMP + diphosphate. It catalyses the reaction (E)-hexadec-2-enoate + ATP + CoA = (2E)-hexadecenoyl-CoA + AMP + diphosphate. The catalysed reaction is (9Z)-octadecenoate + ATP + CoA = (9Z)-octadecenoyl-CoA + AMP + diphosphate. In terms of biological role, catalyzes the conversion of long-chain fatty acids to their active form acyl-CoAs for both synthesis of cellular lipids, and degradation via beta-oxidation. ACSL5 may sensitize epithelial cells to apoptosis specifically triggered by the death ligand TRAIL at the villus tip of the crypt-villus axis of the small intestine. May have a role in the survival of glioma cells. May activate fatty acids from exogenous sources for the synthesis of triacylglycerol destined for intracellular storage. It was suggested that it may also stimulate fatty acid oxidation. Utilizes a wide range of saturated fatty acids with a preference for C16-C18 unsaturated fatty acids. The polypeptide is Long-chain-fatty-acid--CoA ligase 5 (Rattus norvegicus (Rat)).